A 56-amino-acid polypeptide reads, in one-letter code: Large ribosomal subunit protein bL33 (56 aa).

This sequence belongs to the bacterial ribosomal protein bL33 family.

The chain is Large ribosomal subunit protein bL33 from Beutenbergia cavernae (strain ATCC BAA-8 / DSM 12333 / CCUG 43141 / JCM 11478 / NBRC 16432 / NCIMB 13614 / HKI 0122).